The sequence spans 67 residues: Large ribosomal subunit protein uL29 (67 aa).

This sequence belongs to the universal ribosomal protein uL29 family.

In Magnetococcus marinus (strain ATCC BAA-1437 / JCM 17883 / MC-1), this protein is Large ribosomal subunit protein uL29.